Here is a 317-residue protein sequence, read N- to C-terminus: Homoserine O-acetyltransferase (317 aa).

Residue cysteine 142 is the Acyl-thioester intermediate of the active site. Residues lysine 163 and serine 192 each coordinate substrate. Histidine 235 functions as the Proton acceptor in the catalytic mechanism. Residue glutamate 237 is part of the active site. Arginine 249 lines the substrate pocket.

This sequence belongs to the MetA family.

It is found in the cytoplasm. The enzyme catalyses L-homoserine + acetyl-CoA = O-acetyl-L-homoserine + CoA. Its pathway is amino-acid biosynthesis; L-methionine biosynthesis via de novo pathway; O-acetyl-L-homoserine from L-homoserine: step 1/1. Its function is as follows. Transfers an acetyl group from acetyl-CoA to L-homoserine, forming acetyl-L-homoserine. This chain is Homoserine O-acetyltransferase, found in Rhizorhabdus wittichii (strain DSM 6014 / CCUG 31198 / JCM 15750 / NBRC 105917 / EY 4224 / RW1) (Sphingomonas wittichii).